The sequence spans 410 residues: MKQELIERFTRYVKIDTQSNEESHTVPTTPGQIEFGKLLVEELKEIGLTEVTMDDNGYVMATLPANTDKDVPVIGFLAHLDTATDFTGKNVKPQIHENFDGNAITLNEELNVVLTPEQFPELPSYKGHTIITTDGTTLLGADDKAGLTEIMVAMNYLVHNPQIKHGKIRVAFTPDEEIGRGPAHFDVEAFGASFAYTMDGGPLGGLEYESFNAAGAKLTFNGTNTHPGTAKNKMRNATKLAMEFNGYLPVEEAPEYTEGYEGFYHLLSLNGDVEQSKAYYIIRDFDRENFEARKHNVENIVKQMQEKYGQDAVVLEMNDQYYNMLEKIEPVREIVDIAYEAMKSLNIEPNIHPIRGGTDGSQLSYMGLPTPNIFTGGENYHGKFEYVSVDVMEKAVQVIVEIARRFEEQA.

Residue H79 participates in Zn(2+) binding. Residue D81 is part of the active site. D142 lines the Zn(2+) pocket. E176 serves as the catalytic Proton acceptor. Residues E177, D199, and H381 each coordinate Zn(2+).

The protein belongs to the peptidase M20B family. Zn(2+) serves as cofactor.

It is found in the cytoplasm. It carries out the reaction Release of the N-terminal residue from a tripeptide.. Its function is as follows. Cleaves the N-terminal amino acid of tripeptides. This Bacillus cereus (strain ATCC 10987 / NRS 248) protein is Peptidase T.